An 806-amino-acid polypeptide reads, in one-letter code: LisH domain-containing protein ARMC9 (806 aa).

A LisH domain is found at 7–39; it reads YEADLLGLVKEFLNFGEFQETLECFSKECKIKG. Positions 194-230 form a coiled coil; the sequence is KLITLYKESLHNNQEQLQQLQQQLMETEHKARTYKKC. Disordered regions lie at residues 576-604, 650-736, and 748-806; these read FDESVESDDEEEEKDDEEDEDALEADLDK, PLQR…SPRI, and NSSK…SYRK. Positions 579 to 604 are enriched in acidic residues; the sequence is SVESDDEEEEKDDEEDEDALEADLDK. Polar residues predominate over residues 655-688; the sequence is VTPSSHRAMNTVRKNSNSPSPLTNTFKSSQANKM. The segment covering 689-708 has biased composition (low complexity); the sequence is SLSSSRPPTRSGSRASSSDS. Positions 759 to 782 are enriched in polar residues; sequence EVQNATSRKTRTPTIAPQFSQSGP. Positions 783–806 are enriched in low complexity; sequence QQTSYSSSAGSSTRSRQSTQSYRK.

It localises to the cytoplasm. The protein resides in the cytoskeleton. It is found in the cilium basal body. The protein localises to the cell projection. Its subcellular location is the cilium. It localises to the microtubule organizing center. The protein resides in the centrosome. It is found in the centriole. Functionally, involved in ciliogenesis. It is required for appropriate acetylation and polyglutamylation of ciliary microtubules, and regulation of cilium length. Acts as a positive regulator of hedgehog (Hh)signaling. This chain is LisH domain-containing protein ARMC9 (armc9), found in Xenopus laevis (African clawed frog).